Consider the following 233-residue polypeptide: Leucyl/phenylalanyl-tRNA--protein transferase (233 aa).

This sequence belongs to the L/F-transferase family.

It localises to the cytoplasm. It catalyses the reaction N-terminal L-lysyl-[protein] + L-leucyl-tRNA(Leu) = N-terminal L-leucyl-L-lysyl-[protein] + tRNA(Leu) + H(+). The catalysed reaction is N-terminal L-arginyl-[protein] + L-leucyl-tRNA(Leu) = N-terminal L-leucyl-L-arginyl-[protein] + tRNA(Leu) + H(+). It carries out the reaction L-phenylalanyl-tRNA(Phe) + an N-terminal L-alpha-aminoacyl-[protein] = an N-terminal L-phenylalanyl-L-alpha-aminoacyl-[protein] + tRNA(Phe). Functions in the N-end rule pathway of protein degradation where it conjugates Leu, Phe and, less efficiently, Met from aminoacyl-tRNAs to the N-termini of proteins containing an N-terminal arginine or lysine. The protein is Leucyl/phenylalanyl-tRNA--protein transferase of Anaeromyxobacter dehalogenans (strain 2CP-1 / ATCC BAA-258).